We begin with the raw amino-acid sequence, 191 residues long: MKDEHNQEHDHLSQKEPESYQKACACKEQQGEEKQEASEKECEIKEDFELKYKEMHEKYLRVHADFENVKKRLERDKSMALEYAYEKIALDLLPVIDALLGAYKSAAEENKESALTKGLELTMEKLHEVLARHGIEGIECLEEFDPNFHNAIMQVKSEEKENGKIVQVLQQGYKYKGRVLRPAMVSIAKND.

2 stretches are compositionally biased toward basic and acidic residues: residues 1–19 and 29–42; these read MKDEHNQEHDHLSQKEPES and QQGEEKQEASEKEC. The interval 1 to 42 is disordered; sequence MKDEHNQEHDHLSQKEPESYQKACACKEQQGEEKQEASEKEC.

The protein belongs to the GrpE family. As to quaternary structure, homodimer.

The protein resides in the cytoplasm. Its function is as follows. Participates actively in the response to hyperosmotic and heat shock by preventing the aggregation of stress-denatured proteins, in association with DnaK and GrpE. It is the nucleotide exchange factor for DnaK and may function as a thermosensor. Unfolded proteins bind initially to DnaJ; upon interaction with the DnaJ-bound protein, DnaK hydrolyzes its bound ATP, resulting in the formation of a stable complex. GrpE releases ADP from DnaK; ATP binding to DnaK triggers the release of the substrate protein, thus completing the reaction cycle. Several rounds of ATP-dependent interactions between DnaJ, DnaK and GrpE are required for fully efficient folding. The polypeptide is Protein GrpE (Helicobacter pylori (strain HPAG1)).